A 522-amino-acid polypeptide reads, in one-letter code: Cell polarity protein mod5 (522 aa).

Disordered stretches follow at residues 1–83 (MSAL…PDGD), 119–158 (KRSA…FNSN), 170–192 (RRIL…TKSA), 251–285 (PLQP…SPVP), and 300–516 (YSPS…KLEK). 3 stretches are compositionally biased toward polar residues: residues 27-46 (PNTT…SAPS), 66-76 (LPSSKQDTGSS), and 131-146 (NGST…SPSE). Ser43 carries the phosphoserine modification. The span at 258-285 (PANETPASSSSSAKARPVSVPDMSSPVP) shows a compositional bias: low complexity. Ser303 is subject to Phosphoserine. The span at 308-318 (KVAETDSESRK) shows a compositional bias: basic and acidic residues. Over residues 335–349 (GAQTQSTPNRISRSD) the composition is skewed to polar residues. Phosphoserine is present on Ser350. Polar residues-rich tracts occupy residues 363 to 396 (NAST…TSTN) and 404 to 431 (DIPQ…TPQV). The segment covering 439–452 (SRSSPLPSASVPAL) has biased composition (low complexity). Composition is skewed to basic and acidic residues over residues 472 to 482 (HESEMPPHVTR) and 495 to 516 (PKEK…KLEK).

As to quaternary structure, interacts with tea1 and tea3.

It is found in the cell membrane. Its function is as follows. With tea1, acts in a positive-feedback loop in the microtubule-mediated regulation of cell polarity. Involved in the anchoring of tea1 at the cortex as well as the correct localization of tea3. The chain is Cell polarity protein mod5 (mod5) from Schizosaccharomyces pombe (strain 972 / ATCC 24843) (Fission yeast).